The sequence spans 291 residues: ATP synthase gamma chain (291 aa).

Belongs to the ATPase gamma chain family. As to quaternary structure, F-type ATPases have 2 components, CF(1) - the catalytic core - and CF(0) - the membrane proton channel. CF(1) has five subunits: alpha(3), beta(3), gamma(1), delta(1), epsilon(1). CF(0) has three main subunits: a, b and c.

It is found in the cell inner membrane. Its function is as follows. Produces ATP from ADP in the presence of a proton gradient across the membrane. The gamma chain is believed to be important in regulating ATPase activity and the flow of protons through the CF(0) complex. This chain is ATP synthase gamma chain, found in Neisseria gonorrhoeae (strain ATCC 700825 / FA 1090).